The primary structure comprises 142 residues: Cytochrome c-type biogenesis protein CcmE (142 aa).

Over 1-2 (MK) the chain is Cytoplasmic. The chain crosses the membrane as a helical; Signal-anchor for type II membrane protein span at residues 3-23 (GKYLLGILVILGALGYMVFGG). Over 24–142 (LGRNLVYFLT…EVRKLIEEAQ (119 aa)) the chain is Periplasmic. The heme site is built by His118 and Tyr122.

Belongs to the CcmE/CycJ family.

It is found in the cell inner membrane. Functionally, heme chaperone required for the biogenesis of c-type cytochromes. Transiently binds heme delivered by CcmC and transfers the heme to apo-cytochromes in a process facilitated by CcmF and CcmH. The protein is Cytochrome c-type biogenesis protein CcmE of Thermus thermophilus (strain ATCC 27634 / DSM 579 / HB8).